The primary structure comprises 37 residues: Large ribosomal subunit protein bL36c (37 aa).

This sequence belongs to the bacterial ribosomal protein bL36 family.

The protein localises to the plastid. The protein resides in the chloroplast. This is Large ribosomal subunit protein bL36c from Chaetosphaeridium globosum (Charophycean green alga).